The primary structure comprises 174 residues: Gamma-crystallin C (174 aa).

Beta/gamma crystallin 'Greek key' domains follow at residues 2–40 and 41–83; these read GKIT…RVES and GCWM…CLIP. The residue at position 23 (C23) is an S-methylcysteine. A connecting peptide region spans residues 84–87; it reads QTGS. 2 Beta/gamma crystallin 'Greek key' domains span residues 88–128 and 129–171; these read HRLR…HVLE and GCWV…RRVV.

It belongs to the beta/gamma-crystallin family. As to quaternary structure, monomer.

Crystallins are the dominant structural components of the vertebrate eye lens. In Macaca mulatta (Rhesus macaque), this protein is Gamma-crystallin C (CRYGC).